A 370-amino-acid polypeptide reads, in one-letter code: Cobalt-precorrin-5B C(1)-methyltransferase (370 aa).

Belongs to the CbiD family.

It catalyses the reaction Co-precorrin-5B + S-adenosyl-L-methionine = Co-precorrin-6A + S-adenosyl-L-homocysteine. It functions in the pathway cofactor biosynthesis; adenosylcobalamin biosynthesis; cob(II)yrinate a,c-diamide from sirohydrochlorin (anaerobic route): step 6/10. In terms of biological role, catalyzes the methylation of C-1 in cobalt-precorrin-5B to form cobalt-precorrin-6A. The sequence is that of Cobalt-precorrin-5B C(1)-methyltransferase from Pseudomonas savastanoi pv. phaseolicola (strain 1448A / Race 6) (Pseudomonas syringae pv. phaseolicola (strain 1448A / Race 6)).